The sequence spans 156 residues: Low molecular weight protein-tyrosine-phosphatase YfkJ (156 aa).

Catalysis depends on Cys-8, which acts as the Nucleophile. The active site involves Arg-14. The active-site Proton donor is the Asp-125.

It belongs to the low molecular weight phosphotyrosine protein phosphatase family.

It catalyses the reaction O-phospho-L-tyrosyl-[protein] + H2O = L-tyrosyl-[protein] + phosphate. With respect to regulation, efficiently inhibited by Cu(2+) ion, Zn(2+) ion and N-ethylmaleimide, while the addition of Mg(2+), Ca(2+) or Fe(3+) ions has minimal effect. Inhibited in a competitive manner by vanadate. In terms of biological role, dephosphorylates the phosphotyrosine-containing proteins. Involved in ethanol stress resistance. The chain is Low molecular weight protein-tyrosine-phosphatase YfkJ (yfkJ) from Bacillus subtilis (strain 168).